The chain runs to 223 residues: Transcription factor bHLH75 (223 aa).

The interval 58 to 100 is disordered; it reads FPNLLHGNTRRKGNKEESGSKRRRKRSEEEEAMNGDETQKPKD. The 51-residue stretch at 110–160 folds into the bHLH domain; it reads QATDSHSLAERVRREKINERLKCLQDLVPGCYKAMGMAVMLDVIIDYVRSL.

As to quaternary structure, homodimer. In terms of tissue distribution, expressed in leaves, stems, and flowers.

Its subcellular location is the nucleus. The polypeptide is Transcription factor bHLH75 (BHLH75) (Arabidopsis thaliana (Mouse-ear cress)).